A 1828-amino-acid polypeptide reads, in one-letter code: AT-rich interactive domain-containing protein 2 (1828 aa).

Ala-2 carries the post-translational modification N-acetylalanine. Position 4 is a phosphoserine (Ser-4). Glycyl lysine isopeptide (Lys-Gly) (interchain with G-Cter in SUMO2) cross-links involve residues Lys-7, Lys-15, and Lys-119. Residues 13–105 enclose the ARID domain; sequence RRKGLAFLDE…YLEKYEKVHH (93 aa). The LXXLL motif lies at 313-317; sequence LRFLL. Residues 524–603 constitute a DNA-binding region (RFX-type winged-helix); that stretch reads ACQWLNAHFE…IHVIGVKRRA (80 aa). Residue Lys-555 forms a Glycyl lysine isopeptide (Lys-Gly) (interchain with G-Cter in SUMO2) linkage. 2 positions are modified to phosphoserine: Ser-631 and Ser-635. Thr-653 is subject to Phosphothreonine. At Ser-689 the chain carries Phosphoserine. Position 692 is a phosphothreonine (Thr-692). Disordered stretches follow at residues 824–843, 962–1028, 1245–1339, 1360–1462, 1483–1503, and 1566–1618; these read TSPQ…SQPQ, LTGQ…QVQV, KEAT…EPVD, KGDG…RPSV, HSGP…TNGT, and SAAQ…HADP. Polar residues predominate over residues 987-1011; sequence AMSSSSTLQSQGPPPTVSQMLSVKR. The segment covering 1012–1028 has biased composition (low complexity); that stretch reads QQQQQHSPAAPAQQVQV. A compositionally biased stretch (basic and acidic residues) spans 1245–1259; sequence KEATGLHVHERKIEV. The span at 1267-1283 shows a compositional bias: polar residues; sequence RGTTNTSNGDTSESELQ. Phosphoserine is present on Ser-1294. 2 stretches are compositionally biased toward polar residues: residues 1295 to 1320 and 1366 to 1379; these read DSSL…SNGP and LSKN…SNHV. The residue at position 1385 (Ser-1385) is a Phosphoserine. Composition is skewed to polar residues over residues 1390–1400 and 1419–1428; these read QGTSGATQQDT and GSPSTSSMQE. The span at 1453-1462 shows a compositional bias: low complexity; sequence SDVPQQRPSV. A Phosphoserine modification is found at Ser-1491. Composition is skewed to polar residues over residues 1491–1503 and 1567–1586; these read SALS…TNGT and AAQQ…APQN. Over residues 1594-1614 the composition is skewed to low complexity; that stretch reads AVQVQGQPSSSQPSPVSASSQ. Residues 1626-1651 form a C2H2-type zinc finger; it reads FMCLWQSCKKWFQTPSQVFYHAATEH. Residues Lys-1695, Lys-1710, and Lys-1725 each participate in a glycyl lysine isopeptide (Lys-Gly) (interchain with G-Cter in SUMO2) cross-link. Residues 1697-1726 are disordered; the sequence is DEPGQVANQKSSTKQPTVGGTGSAPRAQKA. Over residues 1702-1714 the composition is skewed to polar residues; that stretch reads VANQKSSTKQPTV.

This sequence belongs to the RFX family. Component of the SWI/SNF-B (PBAF) chromatin remodeling complex, at least composed of SMARCA4/BRG1, SMARCB1/BAF47/SNF5, ACTL6A/BAF53A or ACTL6B/BAF53B, SMARCE1/BAF57, SMARCD1/BAF60A, SMARCD2/BAF60B, perhaps SMARCD3/BAF60C, SMARCC1/BAF155, SMARCC2/BAF170, PBRM1/BAF180, ARID2/BAF200 and actin. Interacts with SRF. Forms complexes with SRF and SRF cofactors MYOCD, NKX2-5 and SRFBP1. As to expression, highly expressed in testis, expressed in heart, liver and kidney.

It localises to the nucleus. Its function is as follows. Involved in transcriptional activation and repression of select genes by chromatin remodeling (alteration of DNA-nucleosome topology). Required for the stability of the SWI/SNF chromatin remodeling complex SWI/SNF-B (PBAF). May be involved in targeting the complex to different genes. May be involved in regulating transcriptional activation of cardiac genes. The chain is AT-rich interactive domain-containing protein 2 from Mus musculus (Mouse).